The primary structure comprises 131 residues: Auxin-responsive protein SAUR77 (131 aa).

The protein belongs to the ARG7 family.

May be involved in the regulation of ethylene receptor signaling. Promotes cell expansion and plant growth. The protein is Auxin-responsive protein SAUR77 of Arabidopsis thaliana (Mouse-ear cress).